Here is a 429-residue protein sequence, read N- to C-terminus: Histidine--tRNA ligase (429 aa).

Belongs to the class-II aminoacyl-tRNA synthetase family. In terms of assembly, homodimer.

The protein resides in the cytoplasm. It catalyses the reaction tRNA(His) + L-histidine + ATP = L-histidyl-tRNA(His) + AMP + diphosphate + H(+). In Streptococcus mutans serotype c (strain ATCC 700610 / UA159), this protein is Histidine--tRNA ligase.